The following is a 118-amino-acid chain: MQWALAVLLAFLSPASQKSSNLEGRTKSVIRQTGSSAEITCDLAEGSTGYIHWYLHQEGKAPQRLLYYDSYTSSVVLESGISPGKYDTYGSTRKNLRMILRNLIENDSGVYYCATWDG.

The signal sequence occupies residues 1–17 (MQWALAVLLAFLSPASQ). Positions 18 to 118 (KSSNLEGRTK…GVYYCATWDG (101 aa)) constitute an Ig-like domain. Residues Cys-41 and Cys-113 are joined by a disulfide bond. An N-linked (GlcNAc...) asparagine glycan is attached at Asn-106.

Gamma-delta TR is a heterodimer composed of a gamma and delta chain; disulfide-linked. The gamma-delta TR is associated with the transmembrane signaling CD3 coreceptor proteins following the stoichiometry: a single gamma-delta TR heterodimer associates with one CD3D-CD3E heterodimer, one CD3G-CD3E heterodimer and one CD247 homodimer forming a stable octameric structure. Upon activation, gamma-delta TR complex associates with FCER1G to initiate intracellular signaling.

It is found in the cell membrane. V region of the variable domain of T cell receptor (TR) gamma chain that participates in the antigen recognition. Gamma-delta TRs recognize a variety of self and foreign non-peptide antigens frequently expressed at the epithelial boundaries between the host and external environment, including endogenous lipids presented by MH-like protein CD1D and phosphoantigens presented by butyrophilin-like molecule BTN3A1. Upon antigen recognition induces rapid, innate-like immune responses involved in pathogen clearance and tissue repair. Binding of gamma-delta TR complex to antigen triggers phosphorylation of immunoreceptor tyrosine-based activation motifs (ITAMs) in the CD3 chains by the LCK and FYN kinases, allowing the recruitment, phosphorylation, and activation of ZAP70 that facilitates phosphorylation of the scaffolding proteins LCP2 and LAT. This lead to the formation of a supramolecular signalosome that recruits the phospholipase PLCG1, resulting in calcium mobilization and ERK activation, ultimately leading to T cell expansion and differentiation into effector cells. Gamma-delta TRs are produced through somatic rearrangement of a limited repertoire of variable (V), diversity (D), and joining (J) genes. The potential diversity of gamma-delta TRs is conferred by the unique ability to rearrange (D) genes in tandem and to utilize all three reading frames. The combinatorial diversity is considerably increased by the sequence exonuclease trimming and random nucleotide (N) region additions which occur during the V-(D)-J rearrangements. This chain is T cell receptor gamma variable 4, found in Homo sapiens (Human).